The following is a 364-amino-acid chain: DNA replication and repair protein RecF (364 aa).

30–37 contacts ATP; it reads GNNAQGKT.

The protein belongs to the RecF family.

It is found in the cytoplasm. The RecF protein is involved in DNA metabolism; it is required for DNA replication and normal SOS inducibility. RecF binds preferentially to single-stranded, linear DNA. It also seems to bind ATP. This chain is DNA replication and repair protein RecF, found in Clostridium botulinum (strain Loch Maree / Type A3).